We begin with the raw amino-acid sequence, 1031 residues long: NACHT, LRR and PYD domains-containing protein 3 (1031 aa).

Residues 1–93 (MRMVSVRCKL…YEKAKREEPE (93 aa)) enclose the Pyrin domain. S5 bears the Phosphoserine mark. Y13 bears the Phosphotyrosine mark. Residue C125 is the site of S-palmitoyl cysteine attachment. A required for binding to phosphatidylinositol 4-phosphate (PtdIns4P) region spans residues 126 to 129 (RKKK). Residues Y131, Y135, and Y138 each carry the phosphotyrosine modification. Positions 135-207 (YRKYVRSKFQ…SSVNLELLFD (73 aa)) constitute an FISNA domain. The residue at position 156 (S156) is a Phosphoserine. An ATP-binding site is contributed by T164. Phosphoserine is present on residues S195 and S198. In terms of domain architecture, NACHT spans 217-533 (HTVVFQGAAG…EFFAAMYYLL (317 aa)). 223–230 (GAAGIGKT) lines the ATP pocket. 2 positions are modified to phosphoserine: S262 and S292. K321 is covalently cross-linked (Glycyl lysine isopeptide (Lys-Gly) (interchain with G-Cter in ubiquitin)). S331 carries the phosphoserine modification. A KFERQ-like motif 1 motif is present at residues 352-356 (LEKLQ). A Glycyl lysine isopeptide (Lys-Gly) (interchain with G-Cter in ubiquitin) cross-link involves residue K427. H519 is an ATP binding site. The short motif at 601–605 (KIRLE) is the KFERQ-like motif 2 element. K687 is covalently cross-linked (Glycyl lysine isopeptide (Lys-Gly) (interchain with G-Cter in ubiquitin)). A phosphoserine mark is found at S723 and S730. 5 LRR repeats span residues 737 to 757 (NLTE…NVLC), 766 to 787 (NIRR…NISS), 794 to 814 (KLVE…RLLC), 823 to 844 (NLKK…DLAS), and 851 to 871 (SLTR…GILC). The KFERQ-like motif 3 motif lies at 793–797 (QKLVE). S801 carries the post-translational modification Phosphoserine. Residues C832, C833, and C839 are each lipidated (S-palmitoyl cysteine). A Phosphotyrosine modification is found at Y856. Residue K873 forms a Glycyl lysine isopeptide (Lys-Gly) (interchain with G-Cter in ubiquitin) linkage. LRR repeat units lie at residues 880-901 (NLQK…ALSS), 908-929 (NLTH…LLCE), 937-958 (KLQV…DLST), and 965-986 (SLRK…LLCE). C953 carries the S-palmitoyl cysteine lipid modification. Residue K968 forms a Glycyl lysine isopeptide (Lys-Gly) (interchain with G-Cter in ubiquitin) linkage. Positions 986–990 (EVLKQ) match the KFERQ-like motif 4 motif. S1030 bears the Phosphoserine mark.

Belongs to the NLRP family. As to quaternary structure, sensor component of NLRP3 inflammasomes; inflammasomes are supramolecular complexes that assemble in the cytosol in response to pathogens and other damage-associated signals and play critical roles in innate immunity and inflammation. The core of NLRP3 inflammasomes consists of a signal sensor component (NLRP3), an adapter (PYCARD/ASC), which recruits an effector pro-inflammatory caspase (CASP1 and, possibly, CASP4 and CASP5). Homodecamer; inactive NLRP3 forms homodecameric double-ring cages that hide pyrin domains within NACHT-LRR rings to avoid premature activation. Interacts (via pyrin domain) with PYCARD/ASC (via pyrin domain); interaction is direct. Interacts (via LRR repeat domain) with NEK7 (via N-terminus); the interaction is required for the formation of the complex NLRP3:PYCARD, oligomerization of PYCARD/ASC and activation of CASP1. Interacts (via LRR repeat domain) with NR4A1/Nur77 (via N-terminus); the interaction is direct, requires activation of NR4A1 by its ligands NBRE-containing dsDNA and lipopolysaccharide, and stimulates the association of NLRP3 with NEK7 for non-canonical NLRP3 inflammasome activation. Interacts with CARD8; leading to inhibit formation of the NLRP3 inflammasome. Interacts with MEFV; this interaction targets NLRP3 to degradation by autophagy, hence preventing excessive IL1B- and IL18-mediated inflammation. Interacts with EIF2AK2/PKR; this interaction requires EIF2AK2 activity, is accompanied by EIF2AK2 autophosphorylation and promotes inflammasome assembly in response to specific stimuli. Interacts with GBP5 (via DAPIN domain); this interaction promotes inflammasome assembly in response to microbial and soluble, but not crystalline, agents. Interacts with PML (isoform PML-1) (via the leucine-rich repeat (LRR) domain); PML-mediated increase in NLRP3 inflammasome activation does not depend upon this interaction. Interacts (via NACHT domain) with DHX33 (via DEAH box); NLRP3 activation in presence of cytosolic dsRNA is mediated by DHX33. Interacts (via NACHT and LRR domains) with ARRB2; this interaction is direct and inducible by polyunsaturated fatty acids (PUFAs). Interacts (via NACHT domain) with DDX3X under both LPS-primed and inflammasome-activating conditions. Interacts with IRF4 (via the LRR domain); this interaction is direct and is required for optimal IRF4 binding to IL4 promoter and efficient IL4 transactivation during differentiation of Th2 helper T-cells. Interacts with MAVS; promoting localization to mitochondria and activation of the NLRP3 inflammasome. Interacts with MARK4; promoting localization of NLRP3 to the microtubule organizing center (MTOC). Interacts with TRIM50; this interaction also promotes NLRP3 oligomerization and subsequent inflammasome activation. Interacts with IRGM; preventing NLRP3 inflammasome assembly and promoting NLRP3 degradation. Interacts (via KFERQ-like motifs) with HSPA8/HSC70; promoting NLRP3 degradation by the chaperone-mediated autophagy pathway. Interacts (via NACHT and LLR domains) with ABHD8; this interaction is enhanced in the presence of NLRP3 inflammasome inducers, such as ATP, nigericin, silica, or alum. Interaction with ABHD8 leads the recruitment of ZDHHC12, hence facilitating NLRP3 palmitoylation and degradation by the chaperone-mediated autophagy pathway (CMA), therefore attenuating NLRP3 inflammasome activation. In terms of processing, phosphorylation at Ser-198 by MAPK8/JNK1 increases inflammasome activation by promoting deubiquitination by BRCC3 and NLRP3 homooligomerization. Phosphorylation at Ser-801 by CSNK1A1 prevents inflammasome activation by preventing NEK7 recruitment. Phosphorylation at Ser-5 in the pyrin domain inhibits homomultimerization of NLRP3 and activation of the NLRP3 inflammasome: dephosphorylation by protein phosphatase 2A (PP2A) promotes assembly of the NLRP3 inflammasome. Phosphorylation at Ser-292 by PKD/PRKD1 promotes NLRP3 inflammasome assembly. Phosphorylation by ERK1/MAPK3 promotes NLRP3 inflammasome assembly. Phosphorylation by BTK (at Tyr-131, Tyr-135 and Tyr-138) in the region that mediates binding to phosphatidylinositol phosphate, promotes relocalization of NLRP3 and assembly of the NLRP3 inflammasome. Phosphorylation at Tyr-856 inhibits NLRP3 inflammasome assembly: dephosphorylation by PTPN22 promotes inflammasome activation. Phosphorylated by LATS1 and LATS2 at Ser-262 following palmitoylation by ZDHHC1, promoting its relocalization to the microtubule organizing center (MTOC), where NLRP3 is activated by NEK7, leading to inflammasome assembly and activation. Post-translationally, ubiquitinated; undergoes both 'Lys-48'- and 'Lys-63'-linked polyubiquitination. Ubiquitination does not lead to degradation, but inhibits inflammasome activation. Deubiquitination is catalyzed by BRCC3 and associated with NLRP3 activation and inflammasome assembly. This process can be induced by the activation of Toll-like receptors (by LPS), through a non-transcriptional pathway dependent on the mitochondrial production of reactive oxygen species, and by ATP. Ubiquitinated by TRIM31 via 'Lys-48'-linked ubiquitination, leading to its degradation by the proteasome. Ubiquitinated at Lys-687 by the SCF(FBXL2) complex, leading to its degradation by the proteasome. Ubiquitinated by TRIM35 via 'lys-48' and 'Lys-63'-linked ubiquitination leading to inhibition of NLRP3 inflammasome activation. Undergoes 'Lys-27'-linked polyubiquitination by MARCHF5, leading to NLRP3-NEK7 complex formation and NLRP3 oligomerization. Palmitoylation by ZDHHC12 promotes NLRP3 degradation by the chaperone-mediated autophagy pathway (CMA) and therefore limits NLRP3 inflammasome activation. Interaction with ZDHHC12, and hence NLRP3 palmitoylation, is greatly enhanced by ABHD8. Following palmitoylation, HSPA8/HSC70 recognizes and binds the KFERQ-like motifs on NLRP3 and promotes NLRP3 recruitment to lysosomes, where it is degraded via the chaperone-mediated autophagy pathway in a LAMP2-dependent process. Palmitoylation at Cys-832 and Cys-833 by ZDHHC5 enhances its binding to NEK7 leading to inflammasome assembly and activation. Palmitoylation at Cys-125 and Cys-953 by ZDHHC1 facilitates phosphorylation at Ser-262 by LATS1 and LATS2, promoting its relocalization to the microtubule organizing center (MTOC), where NLRP3 is activated by NEK7, leading to inflammasome assembly and activation. Depalmitoylated by ABHD17A. In terms of processing, degraded via selective autophagy following interaction with IRGM. IRGM promotes NLRP3 recruitment to autophagosome membranes, promoting its SQSTM1/p62-dependent autophagy-dependent degradation.

Its subcellular location is the cytoplasm. The protein resides in the cytosol. It is found in the inflammasome. The protein localises to the cytoskeleton. It localises to the microtubule organizing center. Its subcellular location is the golgi apparatus membrane. The protein resides in the endoplasmic reticulum. It is found in the mitochondrion. The protein localises to the secreted. It localises to the nucleus. The enzyme catalyses ATP + H2O = ADP + phosphate + H(+). Its activity is regulated as follows. Under resting conditions, NLRP3 binds ADP and is autoinhibited. Inactive NLRP3 forms homodecameric double-ring cages that hide pyrin domains within NACHT-LRR rings to avoid premature activation. NLRP3 activation stimuli include extracellular ATP, nigericin, reactive oxygen species, crystals of monosodium urate or cholesterol, amyloid-beta fibers, environmental or industrial particles and nanoparticles, such as asbestos, silica, aluminum salts, cytosolic dsRNA, etc. Almost all stimuli trigger intracellular K(+) efflux. These stimuli lead to membrane perturbations that induce activation of NLRP3. Upon activation, NLRP3 is transported to microtubule organizing center (MTOC), where it is unlocked by NEK7, leading to its relocalization to dispersed trans-Golgi network (dTGN) vesicle membranes and recruitment of PYCARD/ASC for the formation of an active inflammasome complex. NEK7-activated NLRP3 forms a disk-shaped inflammasome. NLRP3 and PYCARD/ASC interact via their respective pyrin domains; interaction initiates speck formation (nucleation) which greatly enhances further addition of soluble PYCARD/ASC molecules to the speck in a prion-like polymerization process. Clustered PYCARD/ASC nucleates the formation of CASP1 filaments through the interaction of their respective CARD domains, acting as a platform for CASP1 polymerization and activation. Active CASP1 then processes IL1B and IL18 precursors, leading to the release of mature cytokines in the extracellular milieu and inflammatory response. NLRP3 inflammasome assembly is inhibited by IRGM, which impedes NLRP3 oligomerization. NLRP3 inflammasome is inhibited by cyclic AMP (cAMP), which directly binds NLRP3; inhibition is relieved by calcium-sensing receptor CASR, which inhibits production of cAMP. Specifically inhibited by sulfonylurea MCC950 (also named CP-456,773, CRID3), a potent and specific small-molecule inhibitor of the NLRP3 inflammasome that acts by preventing ATP hydrolysis. Sensor component of the NLRP3 inflammasome, which mediates inflammasome activation in response to defects in membrane integrity, leading to secretion of inflammatory cytokines IL1B and IL18 and pyroptosis. In response to pathogens and other damage-associated signals that affect the integrity of membranes, initiates the formation of the inflammasome polymeric complex composed of NLRP3, CASP1 and PYCARD/ASC. Recruitment of pro-caspase-1 (proCASP1) to the NLRP3 inflammasome promotes caspase-1 (CASP1) activation, which subsequently cleaves and activates inflammatory cytokines IL1B and IL18 and gasdermin-D (GSDMD), promoting cytokine secretion and pyroptosis. Activation of NLRP3 inflammasome is also required for HMGB1 secretion; stimulating inflammatory responses. Under resting conditions, ADP-bound NLRP3 is autoinhibited. NLRP3 activation stimuli include extracellular ATP, nigericin, reactive oxygen species, crystals of monosodium urate or cholesterol, amyloid-beta fibers, environmental or industrial particles and nanoparticles, such as asbestos, silica, aluminum salts, cytosolic dsRNA, etc. Almost all stimuli trigger intracellular K(+) efflux. These stimuli lead to membrane perturbation and activation of NLRP3. Upon activation, NLRP3 is transported to microtubule organizing center (MTOC), where it is unlocked by NEK7, leading to its relocalization to dispersed trans-Golgi network (dTGN) vesicle membranes and formation of an active inflammasome complex. Associates with dTGN vesicle membranes by binding to phosphatidylinositol 4-phosphate (PtdIns4P). Shows ATPase activity. Its function is as follows. Independently of inflammasome activation, regulates the differentiation of T helper 2 (Th2) cells and has a role in Th2 cell-dependent asthma and tumor growth. During Th2 differentiation, required for optimal IRF4 binding to IL4 promoter and for IRF4-dependent IL4 transcription. Binds to the consensus DNA sequence 5'-GRRGGNRGAG-3'. May also participate in the transcription of IL5, IL13, GATA3, CCR3, CCR4 and MAF. This chain is NACHT, LRR and PYD domains-containing protein 3 (NLRP3), found in Bos taurus (Bovine).